The primary structure comprises 208 residues: Putative chemokine-related protein FP248 (208 aa).

An N-terminal signal peptide occupies residues 1–23; it reads MGTGGSLLCGCSLVLSCLCPSAS. N29 carries an N-linked (GlcNAc...) asparagine glycan.

Its subcellular location is the secreted. This Homo sapiens (Human) protein is Putative chemokine-related protein FP248.